The sequence spans 352 residues: Secreted RxLR effector protein 122 (352 aa).

Residues 1–21 (MRGAYYVLIALLVVASSQTSA) form the signal peptide. The RxLR-dEER signature appears at 48-65 (QFLRGSRNVPGDLAHEER). Residues 280–290 (RGGTTGASRGT) show a composition bias toward low complexity. The tract at residues 280 to 352 (RGGTTGASRG…VEPEGHRSKP (73 aa)) is disordered. A compositionally biased stretch (polar residues) spans 302–315 (AASTSKGKSSVFTE).

This sequence belongs to the RxLR effector family.

Its subcellular location is the secreted. The protein localises to the host nucleus. In terms of biological role, secreted effector that acts as an elicitor that induces cell death in host plant cells. This chain is Secreted RxLR effector protein 122, found in Plasmopara viticola (Downy mildew of grapevine).